Here is a 576-residue protein sequence, read N- to C-terminus: Immunoglobulin mu heavy chain (576 aa).

The residue at position 1 (Q1) is a Pyrrolidone carboxylic acid. 5 Ig-like domains span residues 1–97 (QVTL…TYYC), 132–212 (PTLF…EHVC), 236–334 (PKVS…QNAS), 352–442 (PSFA…QTIS), and 452–553 (PDVY…RTVD). The tract at residues 1–124 (QVTLTESGPA…VWGKGTTVTV (124 aa)) is variable (V) domain, involved in antigen recognition. Cystine bridges form between C22–C97, C153–C212, and C259–C320. N-linked (GlcNAc...) asparagine glycans are attached at residues N74 and N170. The tract at residues 125–576 (SSGSASAPTL…VMSDTAGTCY (452 aa)) is constant (C) domain. N332, N395, and N402 each carry an N-linked (GlcNAc...) asparagine glycan. Intrachain disulfides connect C367–C426 and C474–C536. N563 carries an N-linked (GlcNAc...) asparagine glycan.

Immunoglobulins are composed of two identical heavy chains and two identical light chains; disulfide-linked. It is found almost exclusively as a homopentamer in the serum. Membrane-bound IgM molecules are non-covalently associated with heterodimer of CD79A and CD79B.

Its subcellular location is the secreted. The protein resides in the cell membrane. In terms of biological role, immunoglobulins, also known as antibodies, are membrane-bound or secreted glycoproteins produced by B lymphocytes. In the recognition phase of humoral immunity, the membrane-bound immunoglobulins serve as receptors which, upon binding of a specific antigen, trigger the clonal expansion and differentiation of B lymphocytes into immunoglobulins-secreting plasma cells. Secreted immunoglobulins mediate the effector phase of humoral immunity, which results in the elimination of bound antigens. The antigen binding site is formed by the variable domain of one heavy chain, together with that of its associated light chain. Thus, each immunoglobulin has two antigen binding sites with remarkable affinity for a particular antigen. The variable domains are assembled by a process called V-(D)-J rearrangement and can then be subjected to somatic hypermutations which, after exposure to antigen and selection, allow affinity maturation for a particular antigen. IgM antibodies play an important role in primary defense mechanisms. They have been shown to be involved in early recognition of external invaders like bacteria and viruses, cellular waste and modified self, as well as in recognition and elimination of precancerous and cancerous lesions. The membrane-bound form is found in the majority of normal B cells alongside with IgD. Membrane-bound IgM induces the phosphorylation of CD79A and CD79B by the Src family of protein tyrosine kinases. It may cause death of cells by apoptosis. It is also found in soluble form, which represents about 30% of the total serum immunoglobulins where it is found almost exclusively as a homopentamer. After the antigen binds to the B cell receptor, the secreted form is secreted in large amounts (, PubMed:16895553). The sequence is that of Immunoglobulin mu heavy chain from Homo sapiens (Human).